Here is a 922-residue protein sequence, read N- to C-terminus: Autophagy-related protein 9B (922 aa).

Disordered stretches follow at residues 1 to 22 (MVRR…DLGP) and 85 to 144 (TPHN…MGPL). Residues 1–206 (MVRRTGWGGS…KIYSYHQRNG (206 aa)) lie on the Cytoplasmic side of the membrane. A compositionally biased stretch (polar residues) spans 85-114 (TPHNVLPTPTTPSTQAHPTMIHTSASPSWG). Over residues 115–124 (SHSTPPLASA) the composition is skewed to low complexity. A Tyrosine-based sorting signal motif is present at residues 150–153 (YERL). A helical transmembrane segment spans residues 207 to 227 (FACILLEDVFQLGQFIFIVTF). At 228–275 (TTFLLRCVDYNVLFNNQPKNHTRRGPLHSKVTLSDAILPSAQCAEKIH) the chain is on the lumenal side. The helical transmembrane segment at 276–296 (DSPLLVFLLVLAAGFWLFQLL) threads the bilayer. Residues 297–437 (RSVCNLFSYW…GVLANRWRRT (141 aa)) lie on the Cytoplasmic side of the membrane. Residues 438–458 (VLLLAAVNLALSPLVLAWQVL) lie within the membrane without spanning it. Topologically, residues 459–523 (HAFYSHVELL…RAAEPPAPLR (65 aa)) are cytoplasmic. The chain crosses the membrane as a helical span at residues 524 to 544 (ALLARQLVFFSGALFAALLVL). Topologically, residues 545 to 550 (TIYDED) are lumenal. The helical transmembrane segment at 551-571 (VLAVEHVLTTMTALGVTATVA) threads the bilayer. The Cytoplasmic portion of the chain corresponds to 572–624 (RSFIPEEQCQGRSSQLLLQAALAHMHYLPEEPGATGARASSYWQMAQLLQYRA). An intramembrane segment occupies 625-645 (VSLLEELLSPLLTPLFLLFWF). Residues 646–922 (RPRALEIIDF…QKEPLTGPLH (277 aa)) are Cytoplasmic-facing. The disordered stretch occupies residues 848–922 (ELWGEASASS…QKEPLTGPLH (75 aa)). Composition is skewed to low complexity over residues 854–870 (SASS…QPGS) and 877–889 (SWSS…ASSP). Polar residues predominate over residues 890–899 (RQQWGTQRAQ).

It belongs to the ATG9 family. As to quaternary structure, homotrimer; forms a homotrimer with a central pore that forms a path between the two membrane leaflets. As to expression, expressed in heart, brain, and placenta and testis.

The protein localises to the preautophagosomal structure membrane. The catalysed reaction is a 1,2-diacyl-sn-glycero-3-phosphocholine(in) = a 1,2-diacyl-sn-glycero-3-phosphocholine(out). The enzyme catalyses a 1,2-diacyl-sn-glycero-3-phospho-L-serine(in) = a 1,2-diacyl-sn-glycero-3-phospho-L-serine(out). It carries out the reaction a 1,2-diacyl-sn-glycero-3-phosphoethanolamine(in) = a 1,2-diacyl-sn-glycero-3-phosphoethanolamine(out). In terms of biological role, phospholipid scramblase involved in autophagy by mediating autophagosomal membrane expansion. Cycles between the preautophagosomal structure/phagophore assembly site (PAS) and the cytoplasmic vesicle pool and supplies membrane for the growing autophagosome. Lipid scramblase activity plays a key role in preautophagosomal structure/phagophore assembly by distributing the phospholipids that arrive through ATG2 (ATG2A or ATG2B) from the cytoplasmic to the luminal leaflet of the bilayer, thereby driving autophagosomal membrane expansion. In addition to autophagy, also plays a role in necrotic cell death. The sequence is that of Autophagy-related protein 9B from Mus musculus (Mouse).